A 500-amino-acid chain; its full sequence is Ribose import ATP-binding protein RbsA (500 aa).

ABC transporter domains follow at residues 6-242 (LALS…VGRK) and 252-495 (AQQG…VGRN). 38–45 (GENGAGKS) provides a ligand contact to ATP.

Belongs to the ABC transporter superfamily. Ribose importer (TC 3.A.1.2.1) family. The complex is composed of an ATP-binding protein (RbsA), two transmembrane proteins (RbsC) and a solute-binding protein (RbsB).

Its subcellular location is the cell inner membrane. The catalysed reaction is D-ribose(out) + ATP + H2O = D-ribose(in) + ADP + phosphate + H(+). Its function is as follows. Part of the ABC transporter complex RbsABC involved in ribose import. Responsible for energy coupling to the transport system. The chain is Ribose import ATP-binding protein RbsA from Vibrio cholerae serotype O1 (strain ATCC 39315 / El Tor Inaba N16961).